Here is a 147-residue protein sequence, read N- to C-terminus: Large ribosomal subunit protein uL15 (147 aa).

The segment at 1–57 is disordered; that stretch reads MRLHDVKPQKGSKKRKKRVARGISAGQGASAGLGMRGQKSRSGSGTRPGFEGGQQPL. A compositionally biased stretch (basic residues) spans 10–20; the sequence is KGSKKRKKRVA.

It belongs to the universal ribosomal protein uL15 family. In terms of assembly, part of the 50S ribosomal subunit.

Binds to the 23S rRNA. The protein is Large ribosomal subunit protein uL15 of Nostoc punctiforme (strain ATCC 29133 / PCC 73102).